A 203-amino-acid polypeptide reads, in one-letter code: MNKLREQTLALASILQTTTLIDQLASTGTCDANSNQASLKSIITSSTKLEEVFNQKQDLLVGIDALKVVLSNKTKCIQHIIFYALALINLEKKLMKNQTLLNQITLEIDLIRNQDFFEISHINSIARLAQLYKSTLGGLNPKIMINGQQIYLSNKHTSNHIRALLLAGIRAVSLWKSQGGKTWHLLLNKKKILNLINTLEGLN.

This sequence belongs to the HflD family.

It localises to the cytoplasm. The protein localises to the cell inner membrane. The protein is High frequency lysogenization protein HflD homolog of Vesicomyosocius okutanii subsp. Calyptogena okutanii (strain HA).